The chain runs to 224 residues: UPF0758 protein PD_0117 (224 aa).

An MPN domain is found at 102 to 224 (SIHDPISAGR…PVSFAEHGWL (123 aa)). Residues H173, H175, and D186 each coordinate Zn(2+). A JAMM motif motif is present at residues 173–186 (HNHPSGNREPSPAD).

It belongs to the UPF0758 family.

The protein is UPF0758 protein PD_0117 of Xylella fastidiosa (strain Temecula1 / ATCC 700964).